The chain runs to 276 residues: Homeobox-leucine zipper protein HOX11 (276 aa).

The interval 1-92 (MVDGHLEAST…DDGGSARKKL (92 aa)) is disordered. Polar residues predominate over residues 39–48 (LSSSPNNSAG). Residues 58–73 (HGLGGNDAAPGGGGGD) are compositionally biased toward gly residues. The segment at residues 87–146 (SARKKLRLSKEQSAFLEESFKEHSTLNPKQKLALAKQLNLRPRQVEVWFQNRRARTKLKQ) is a DNA-binding region (homeobox). Residues 145–189 (KQTEVDCEYLKRCCETLTEENRRLQKELAELRALKTVHPFYMHLP) form a leucine-zipper region. The tract at residues 214–244 (AATSSTAAPPAAPSSGGIAATSSSSAAAAAA) is disordered.

It belongs to the HD-ZIP homeobox family. Class II subfamily. As to expression, expressed in stems, leaf sheaths and blades and panicles.

It localises to the nucleus. In terms of biological role, probable transcription factor. The chain is Homeobox-leucine zipper protein HOX11 (HOX11) from Oryza sativa subsp. indica (Rice).